We begin with the raw amino-acid sequence, 119 residues long: Beta-2-microglobulin (119 aa).

The N-terminal stretch at Met-1–Ala-20 is a signal peptide. In terms of domain architecture, Ig-like C1-type spans Pro-25–Lys-114. Cys-45 and Cys-100 are oxidised to a cystine.

It belongs to the beta-2-microglobulin family. As to quaternary structure, heterodimer of an alpha chain and a beta chain. Beta-2-microglobulin is the beta-chain of major histocompatibility complex class I molecules.

Its subcellular location is the secreted. Its function is as follows. Component of the class I major histocompatibility complex (MHC). Involved in the presentation of peptide antigens to the immune system. The polypeptide is Beta-2-microglobulin (B2M) (Aotus azarae (Azara's night monkey)).